An 88-amino-acid polypeptide reads, in one-letter code: Kunitz-type U15-theraphotoxin-Hhn1i (88 aa).

The first 27 residues, 1–27 (MGTARFLRAVLLLSVLLMVTFPALLSA), serve as a signal peptide directing secretion. Residues 28-33 (EHHDGR) constitute a propeptide that is removed on maturation. In terms of domain architecture, BPTI/Kunitz inhibitor spans 37 to 85 (CRLPSDSGDCLRFFEMRYFDGTTCTKFVYGGYGGNDNRFPTEKACMKRC). 2 disulfide bridges follow: cysteine 37–cysteine 85 and cysteine 60–cysteine 81.

Belongs to the venom Kunitz-type family. 03 (sub-Kunitz) subfamily. As to expression, expressed by the venom gland.

It localises to the secreted. Its function is as follows. Serine protease inhibitor that inhibits trypsin at a molar ratio of 1:1. The protein is Kunitz-type U15-theraphotoxin-Hhn1i of Cyriopagopus hainanus (Chinese bird spider).